Here is a 307-residue protein sequence, read N- to C-terminus: ADP,ATP carrier protein 3 (307 aa).

Solcar repeat units lie at residues 10–103, 114–206, and 214–300; these read TNFA…IKLM, KWFA…LKPL, and GSFL…LQMI. 5 consecutive transmembrane segments (helical) span residues 12 to 39, 80 to 104, 112 to 132, 182 to 203, and 217 to 237; these read FAINFLMGGVSAAIAKTAASPIERVKIL, TANVIRYFPTQALNFAFKDKIKLMF, YGKWFAGNLASGGAAGALSLL, FMPSVVGIVVYRGLYFGMFDSL, and LASFLLGWVVTTGASTCSYPL. Positions 85 and 97 each coordinate ADP. Position 241 (R241) interacts with ADP. An important for transport activity region spans residues 241–246; sequence RRRMMM. Positions 241 to 246 match the Nucleotide carrier signature motif motif; sequence RRRMMM. A helical transmembrane segment spans residues 277-297; it reads CGANILRSVAGAGVISMYDQL.

It belongs to the mitochondrial carrier (TC 2.A.29) family. As to quaternary structure, monomer.

The protein resides in the mitochondrion inner membrane. The catalysed reaction is ADP(in) + ATP(out) = ADP(out) + ATP(in). Its activity is regulated as follows. The matrix-open state (m-state) is inhibited by the membrane-permeable bongkrekic acid (BKA). The cytoplasmic-open state (c-state) is inhibited by the membrane-impermeable toxic inhibitor carboxyatractyloside (CATR). Its function is as follows. ADP:ATP antiporter that mediates import of ADP into the mitochondrial matrix for ATP synthesis, and export of ATP out to fuel the cell. Cycles between the cytoplasmic-open state (c-state) and the matrix-open state (m-state): operates by the alternating access mechanism with a single substrate-binding site intermittently exposed to either the cytosolic (c-state) or matrix (m-state) side of the inner mitochondrial membrane. This chain is ADP,ATP carrier protein 3 (AAC3), found in Saccharomyces cerevisiae (strain ATCC 204508 / S288c) (Baker's yeast).